Here is a 135-residue protein sequence, read N- to C-terminus: Large-conductance mechanosensitive channel (135 aa).

Transmembrane regions (helical) follow at residues 10-30 (FAMR…AAFG) and 76-96 (GVFI…FLAI).

Belongs to the MscL family. Homopentamer.

The protein resides in the cell inner membrane. Channel that opens in response to stretch forces in the membrane lipid bilayer. May participate in the regulation of osmotic pressure changes within the cell. This Cronobacter sakazakii (strain ATCC BAA-894) (Enterobacter sakazakii) protein is Large-conductance mechanosensitive channel.